A 150-amino-acid polypeptide reads, in one-letter code: Protein SprT-like (150 aa).

Residues 11–149 (ELVDKLSLTY…CGKCRGSLKE (139 aa)) form the SprT-like domain. Zn(2+) is bound at residue H70. Residue E71 is part of the active site. H74 contacts Zn(2+).

This sequence belongs to the SprT family. Zn(2+) is required as a cofactor.

It is found in the cytoplasm. The protein is Protein SprT-like of Oceanobacillus iheyensis (strain DSM 14371 / CIP 107618 / JCM 11309 / KCTC 3954 / HTE831).